The following is a 328-amino-acid chain: Malate dehydrogenase (328 aa).

12–18 serves as a coordination point for NAD(+); sequence GAAGQIA. Substrate is bound by residues Arg93 and Arg99. NAD(+)-binding positions include Asn106, Gln113, and 130-132; that span reads VGN. Asn132 and Arg163 together coordinate substrate. The Proton acceptor role is filled by His188.

It belongs to the LDH/MDH superfamily. MDH type 2 family.

The catalysed reaction is (S)-malate + NAD(+) = oxaloacetate + NADH + H(+). Its function is as follows. Catalyzes the reversible oxidation of malate to oxaloacetate. This chain is Malate dehydrogenase, found in Burkholderia cenocepacia (strain HI2424).